The chain runs to 418 residues: Putative F-box protein At3g23950 (418 aa).

An F-box domain is found at methionine 1–cysteine 42.

This chain is Putative F-box protein At3g23950, found in Arabidopsis thaliana (Mouse-ear cress).